We begin with the raw amino-acid sequence, 580 residues long: Transcription factor coe2-B (580 aa).

Residues 60-63 (RKSN) form an interaction with DNA region. The segment at 148–167 (CRVLLTHEVMCSRCCEKKSC) adopts a C5-type zinc-finger fold. Interaction with DNA stretches follow at residues 194 to 201 (NCLKTAGN) and 233 to 236 (NNSK). The IPT/TIG domain maps to 259–341 (PCIKAISPSE…CKGAPGRFIY (83 aa)). The tract at residues 455 to 492 (IRNTSSISPRGYSSSSTPQQSNYSTPSNSMNGYSNVPM) is disordered. Positions 459–481 (SSISPRGYSSSSTPQQSNYSTPS) are enriched in low complexity. Over residues 482–492 (NSMNGYSNVPM) the composition is skewed to polar residues.

It belongs to the COE family. As to expression, in embryos, expressed in precursors of primary neurons. In adults, expressed at high levels in the brain, and at low levels in the somatic muscles, testis, and possibly the spleen.

Its subcellular location is the nucleus. In terms of biological role, may play a pivotal role in the transcriptional cascade that specifies primary neurons in embryos. Stabilizes the higher neural potential of selected progenitor cells that express neurog2/X-ngnr-1 by maintaining Delta-Notch signaling. Thus ensures the transition between neural competence and irreversible commitment to a neural fate. Also promotes neuronal differentiation by activating neurod1 expression, directly or indirectly. The protein is Transcription factor coe2-B of Xenopus laevis (African clawed frog).